The primary structure comprises 1047 residues: Ribonucleoside-diphosphate reductase subunit alpha (1047 aa).

ATP-cone domains are found at residues 9–111, 118–219, and 237–327; these read CTIV…KAHR, LSVV…ARVR, and VEVL…EALG. Substrate contacts are provided by residues Thr442, 457–458, Gly486, 670–674, and 857–861; these read SC, NLCTE, and PTATI. Cys458 and Cys687 are oxidised to a cystine. Asn670 acts as the Proton acceptor in catalysis. Cys672 functions as the Cysteine radical intermediate in the catalytic mechanism. Residue Glu674 is the Proton acceptor of the active site.

It belongs to the ribonucleoside diphosphate reductase large chain family. As to quaternary structure, tetramer of two alpha and two beta subunits.

The catalysed reaction is a 2'-deoxyribonucleoside 5'-diphosphate + [thioredoxin]-disulfide + H2O = a ribonucleoside 5'-diphosphate + [thioredoxin]-dithiol. Under complex allosteric control mediated by deoxynucleoside triphosphates and ATP binding. The type of nucleotide bound at the specificity site determines substrate preference. It seems probable that ATP makes the enzyme reduce CDP and UDP, dGTP favors ADP reduction and dTTP favors GDP reduction. Provides the precursors necessary for DNA synthesis. Catalyzes the biosynthesis of deoxyribonucleotides from the corresponding ribonucleotides. In Chlamydia trachomatis serovar D (strain ATCC VR-885 / DSM 19411 / UW-3/Cx), this protein is Ribonucleoside-diphosphate reductase subunit alpha (nrdA).